Reading from the N-terminus, the 703-residue chain is Polyribonucleotide nucleotidyltransferase (703 aa).

Mg(2+) is bound by residues Asp-486 and Asp-492. The region spanning 553–614 (PRITTIWIKP…AACDAAIQMI (62 aa)) is the KH domain. The S1 motif domain occupies 624 to 692 (GKLYMGTVKK…KQGKIKLSRK (69 aa)).

It belongs to the polyribonucleotide nucleotidyltransferase family. Requires Mg(2+) as cofactor.

The protein localises to the cytoplasm. The enzyme catalyses RNA(n+1) + phosphate = RNA(n) + a ribonucleoside 5'-diphosphate. In terms of biological role, involved in mRNA degradation. Catalyzes the phosphorolysis of single-stranded polyribonucleotides processively in the 3'- to 5'-direction. The sequence is that of Polyribonucleotide nucleotidyltransferase from Trichlorobacter lovleyi (strain ATCC BAA-1151 / DSM 17278 / SZ) (Geobacter lovleyi).